The sequence spans 136 residues: uncharacterized protein (136 aa).

The next 2 membrane-spanning stretches (helical) occupy residues 25–47 (ILKA…PHAF) and 78–97 (ITGA…LLTA).

It is found in the cell membrane. This is an uncharacterized protein from Bacillus subtilis (strain 168).